The chain runs to 182 residues: Translation initiation factor IF-3, chloroplastic (182 aa).

It belongs to the IF-3 family. In terms of assembly, monomer.

It is found in the plastid. The protein localises to the chloroplast. Its function is as follows. IF-3 binds to the 30S ribosomal subunit and shifts the equilibrium between 70S ribosomes and their 50S and 30S subunits in favor of the free subunits, thus enhancing the availability of 30S subunits on which protein synthesis initiation begins. This is Translation initiation factor IF-3, chloroplastic from Porphyra purpurea (Red seaweed).